A 267-amino-acid polypeptide reads, in one-letter code: Cell cycle checkpoint protein RAD1 homolog mrt-2 (267 aa).

It belongs to the Rad1 family. As to quaternary structure, probable component of the toroidal 9-1-1 (RAD9-RAD1-HUS1) complex, composed of hpr-9, mrt-2 and hus-1. Interacts with hus-1. Might associate with hpr-9.

Its subcellular location is the nucleus. It carries out the reaction Exonucleolytic cleavage in the 3'- to 5'-direction to yield nucleoside 5'-phosphates.. May be a component of the 9-1-1 cell-cycle checkpoint response complex that plays a major role in DNA repair. Promotes DNA double strand break-induced cell cycle arrest and apoptosis, thereby playing a role in genome stability. Also required for telomere length maintenance and germline immortality. May possess 3'-&gt;5' double stranded DNA exonuclease activity. This chain is Cell cycle checkpoint protein RAD1 homolog mrt-2, found in Caenorhabditis elegans.